A 318-amino-acid polypeptide reads, in one-letter code: Methionyl-tRNA formyltransferase (318 aa).

112–115 (SILP) is a binding site for (6S)-5,6,7,8-tetrahydrofolate.

This sequence belongs to the Fmt family.

The enzyme catalyses L-methionyl-tRNA(fMet) + (6R)-10-formyltetrahydrofolate = N-formyl-L-methionyl-tRNA(fMet) + (6S)-5,6,7,8-tetrahydrofolate + H(+). Functionally, attaches a formyl group to the free amino group of methionyl-tRNA(fMet). The formyl group appears to play a dual role in the initiator identity of N-formylmethionyl-tRNA by promoting its recognition by IF2 and preventing the misappropriation of this tRNA by the elongation apparatus. The chain is Methionyl-tRNA formyltransferase from Shewanella frigidimarina (strain NCIMB 400).